We begin with the raw amino-acid sequence, 118 residues long: MATPSLRGRLARFGNPRKPVLKPNKPLILANRVGERRREKGEATCITEMSVMMACWKQNEFRDDACRKEIQGFLDCAARAQEARKMRSIQETLGESGSLLPNKLNKLLQRFPNKPYLS.

The region spanning 42-84 (EATCITEMSVMMACWKQNEFRDDACRKEIQGFLDCAARAQEAR) is the CHCH domain. 2 short sequence motifs (cx9C motif) span residues 45-55 (CITEMSVMMAC) and 66-76 (CRKEIQGFLDC). Intrachain disulfides connect Cys45-Cys76 and Cys55-Cys66.

This sequence belongs to the mitochondrion-specific ribosomal protein mS37 family. As to quaternary structure, component of the mitochondrial small ribosomal subunit (mt-SSU). Mature mammalian 55S mitochondrial ribosomes consist of a small (28S) and a large (39S) subunit. The 28S small subunit contains a 12S ribosomal RNA (12S mt-rRNA) and 30 different proteins. The 39S large subunit contains a 16S rRNA (16S mt-rRNA), a copy of mitochondrial valine transfer RNA (mt-tRNA(Val)), which plays an integral structural role, and 52 different proteins.

The protein localises to the mitochondrion. Its subcellular location is the nucleus. The polypeptide is Small ribosomal subunit protein mS37 (CHCHD1) (Homo sapiens (Human)).